The sequence spans 238 residues: DNA repair protein RAD59 (238 aa).

This sequence belongs to the RAD52 family. Interacts with RAD51 and RAD52.

Its subcellular location is the nucleus. In terms of biological role, involved in the repair of double-strand breaks in DNA during vegetative growth via recombination and single-strand annealing. Anneals complementary single-stranded DNA. The protein is DNA repair protein RAD59 (RAD59) of Saccharomyces cerevisiae (strain ATCC 204508 / S288c) (Baker's yeast).